We begin with the raw amino-acid sequence, 178 residues long: MIMSKEKLIKSIREVPDFPIPGILFYDVTTLFKDSERLQELSDIMYEMYKDKGITKVVGIESRGFIMGPILATRLGAGFIPIRKPGKLPAETMEESYDKEYGKDTVQIHKDALNENDVVLLHDDLLATGGTMKAACNLVKKLHPKKVYVNFIIELKELNGKQVFENDQDVDIQSVLSL.

It belongs to the purine/pyrimidine phosphoribosyltransferase family. In terms of assembly, homodimer.

It is found in the cytoplasm. It carries out the reaction AMP + diphosphate = 5-phospho-alpha-D-ribose 1-diphosphate + adenine. The protein operates within purine metabolism; AMP biosynthesis via salvage pathway; AMP from adenine: step 1/1. In terms of biological role, catalyzes a salvage reaction resulting in the formation of AMP, that is energically less costly than de novo synthesis. The sequence is that of Adenine phosphoribosyltransferase from Bacteroides fragilis (strain ATCC 25285 / DSM 2151 / CCUG 4856 / JCM 11019 / LMG 10263 / NCTC 9343 / Onslow / VPI 2553 / EN-2).